The chain runs to 437 residues: Phosphomethylpyrimidine synthase (437 aa).

Residues Asn-69, Met-98, Tyr-127, His-163, 185-187 (SRG), 226-229 (DACR), and Glu-265 each bind substrate. Residue His-269 participates in Zn(2+) binding. Tyr-292 contributes to the substrate binding site. His-333 is a Zn(2+) binding site. Positions 409, 412, and 416 each coordinate [4Fe-4S] cluster.

The protein belongs to the ThiC family. [4Fe-4S] cluster is required as a cofactor.

The catalysed reaction is 5-amino-1-(5-phospho-beta-D-ribosyl)imidazole + S-adenosyl-L-methionine = 4-amino-2-methyl-5-(phosphooxymethyl)pyrimidine + CO + 5'-deoxyadenosine + formate + L-methionine + 3 H(+). The protein operates within cofactor biosynthesis; thiamine diphosphate biosynthesis. In terms of biological role, catalyzes the synthesis of the hydroxymethylpyrimidine phosphate (HMP-P) moiety of thiamine from aminoimidazole ribotide (AIR) in a radical S-adenosyl-L-methionine (SAM)-dependent reaction. The chain is Phosphomethylpyrimidine synthase from Alkaliphilus metalliredigens (strain QYMF).